The chain runs to 769 residues: MSPKLPQHGTVGVRTPLVDGVEKVTGKAKYTADIAAPDALVGRILRSPHAHARILAIDTSAAEALEGVIAVCTGAETPVPFGVLPIAENEYPLARDKVRYRGDPVAAVAAIDEVTAEKALALIKVDYEVLPAYMTPKAAMKAGAIALHDDKPNNILREVHAEFGDVAAAFAEADLIREKTYTFAEVNHVHMELNATLAEYDPVRDMLTLNTTTQVPYYVHLKVAACLQMDSARIRVIKPFLGGGFGARTEGLHFEIIAGLLARKAKGTVRLLQTREETFIAHRGRPWTEVKMKIGLKKDGKIAALALEATQAGGAYAGYGIITILYTGALMHGLYHIPAIKHDAWRVYTNTPPCGAMRGHGTVDTRAAFEALLTEMGEELGIDSLKIRQINMLPQIPYVTMYAQRVMSYGVPECLEKVKAASGWEERKGKLPKGRGLGIALSHFVSGTSTPKHWTGEPHATVNLKLDFDGGITLLTGAADIGQGSNTMASQVAAEVLGVRLSRIRVISADSALTPKDNGSYSSRVTFMVGNASISAAEELKGVLVKAAAKKLDAREEDIEVIDEMFMVSGSQDPGLSFQEVVKAAMVDSGTITVKGTYTCPTEFQGDKKIRGSAIGATMGFCYAAQVVEASVDEITGKVTAHKVWVAVDVGKALNPLAVEGQTQGGVWMGMGQALSEETVYDNGRMVHGNILDYRVPTIVESPDIEVIIVESMDPNGPFGAKEASEGMLAGFLPAIHEAVYEAVGVRATDFPLSPDRITELLDAKEAAA.

Mo-molybdopterin cytosine dinucleotide-binding positions include Q214, 244–245 (GF), 522–526 (SSRVT), 650–655 (VGKALN), and 722–725 (KEAS).

This sequence belongs to the xanthine dehydrogenase family. As to quaternary structure, heterohexamer of two alpha, two beta and two gamma subunits. It depends on Mo-molybdopterin cytosine dinucleotide as a cofactor. Post-translationally, the N-terminus is blocked.

The catalysed reaction is oxidized 2[4Fe-4S]-[ferredoxin] + benzoyl-CoA + H2O = 4-hydroxybenzoyl-CoA + reduced 2[4Fe-4S]-[ferredoxin] + 2 H(+). Its activity is regulated as follows. Inactivated by low concentrations of cyanide in vitro. Its function is as follows. Component of a complex that catalyzes the reductive dehydroxylation of 4-hydroxybenzoyl-CoA to benzoyl-CoA. Reaction is not reversible. Is a key enzyme in the anaerobic degradation of phenolic compounds. The chain is 4-hydroxybenzoyl-CoA reductase subunit alpha (hcrA) from Thauera aromatica.